The chain runs to 651 residues: Histone-arginine methyltransferase CARM1 (651 aa).

The segment at 28–139 (ATVSVFPGAR…GHTLERSVFS (112 aa)) is interaction with C9orf72. Residues 147–454 (AVQYFQFYGY…KRQSYDISIV (308 aa)) enclose the SAM-dependent MTase PRMT-type domain. S-adenosyl-L-methionine contacts are provided by glutamine 160, arginine 169, glycine 193, and glutamate 215. Serine 217 bears the Phosphoserine mark. A Glycyl lysine isopeptide (Lys-Gly) (interchain with G-Cter in ubiquitin) cross-link involves residue lysine 228. S-adenosyl-L-methionine contacts are provided by glutamate 244 and serine 272. The interval 347–380 (RILMAKSVKYTVNFLEAKEGDLHRIEIPFKFHML) is required for nuclear translocation. The tract at residues 500-651 (TGSTYNLSSG…IPTNTMHYGS (152 aa)) is transactivation domain. Arginine 551 carries the dimethylated arginine modification. Positions 581 to 617 (RSSYQWGPGRLRGHAGSSVPMTCPTGSSGAQGGGGSS) are disordered.

The protein belongs to the class I-like SAM-binding methyltransferase superfamily. Protein arginine N-methyltransferase family. As to quaternary structure, homodimer. Interacts with NR1H4. Interacts with SNRPC. Interacts with the C-terminus of NCOA2/GRIP1, NCO3/ACTR and NCOA1/SRC1. Part of a complex consisting of CARM1, EP300/P300 and NCOA2/GRIP1. Interacts with FLII, TP53, myogenic factor MEF2, EP300/P300, TRIM24, CREBBP and CTNNB1. Interacts with RELA. Identified in a complex containing CARM1, TRIM24 and NCOA2/GRIP1. Interacts with NCOA3/SRC3. Interacts with SKP2. Interacts (via PH domain-like fold) with C9orf72. Interacts with PARP1; promoting PARP1 recruimtent to replication forks. Post-translationally, auto-methylated on Arg-551. Methylation enhances transcription coactivator activity. Methylation is required for its role in the regulation of pre-mRNA alternative splicing. In terms of processing, phosphorylation at Ser-217 interferes with S-adenosyl-L-methionine binding and strongly reduces methyltransferase activity. Phosphorylation at Ser-217 is strongly increased during mitosis, and decreases rapidly to a very low, basal level after entry into the G1 phase of the cell cycle. Phosphorylation at Ser-217 may promote location in the cytosol. Ubiquitinated by E3 ubiquitin-protein ligase complex containing FBXO9 at Lys-228; leading to proteasomal degradation. As to expression, isoform 1 is expressed at low levels in brain, liver and testis. Isoform 2 is highly expressed in brain, liver, skeletal muscle and testis. In terms of tissue distribution, isoform 3 is highly expressed in spleen, liver and kidney. As to expression, isoform 4 is expressed in spleen, liver and kidney.

The protein localises to the nucleus. It localises to the cytoplasm. Its subcellular location is the chromosome. The catalysed reaction is L-arginyl-[protein] + 2 S-adenosyl-L-methionine = N(omega),N(omega)-dimethyl-L-arginyl-[protein] + 2 S-adenosyl-L-homocysteine + 2 H(+). With respect to regulation, methylation of H3R17 (H3R17me) by CARM1 is stimulated by preacetylation of H3 'Lys-18' (H3K18ac) H3 'Lys-23' (H3K23ac) by EP300 and blocked by citrullination of H3 'Arg-17' (H3R17ci) by PADI4. Its function is as follows. Methylates (mono- and asymmetric dimethylation) the guanidino nitrogens of arginyl residues in several proteins involved in DNA packaging, transcription regulation, pre-mRNA splicing, and mRNA stability. Recruited to promoters upon gene activation together with histone acetyltransferases from EP300/P300 and p160 families, methylates histone H3 at 'Arg-17' (H3R17me), forming mainly asymmetric dimethylarginine (H3R17me2a), leading to activation of transcription via chromatin remodeling. During nuclear hormone receptor activation and TCF7L2/TCF4 activation, acts synergically with EP300/P300 and either one of the p160 histone acetyltransferases NCOA1/SRC1, NCOA2/GRIP1 and NCOA3/ACTR or CTNNB1/beta-catenin to activate transcription. During myogenic transcriptional activation, acts together with NCOA3/ACTR as a coactivator for MEF2C. During monocyte inflammatory stimulation, acts together with EP300/P300 as a coactivator for NF-kappa-B. Acts as a coactivator for PPARG, promotes adipocyte differentiation and the accumulation of brown fat tissue. Plays a role in the regulation of pre-mRNA alternative splicing by methylation of splicing factors. Also seems to be involved in p53/TP53 transcriptional activation. Methylates EP300/P300, both at 'Arg-2142', which may loosen its interaction with NCOA2/GRIP1, and at 'Arg-580' and 'Arg-604' in the KIX domain, which impairs its interaction with CREB and inhibits CREB-dependent transcriptional activation. Also methylates arginine residues in RNA-binding proteins PABPC1, ELAVL1 and ELAV4, which may affect their mRNA-stabilizing properties and the half-life of their target mRNAs. Acts as a transcriptional coactivator of ACACA/acetyl-CoA carboxylase by enriching H3R17 methylation at its promoter, thereby positively regulating fatty acid synthesis. Independently of its methyltransferase activity, involved in replication fork progression: promotes PARP1 recruitment to replication forks, leading to poly-ADP-ribosylation of chromatin at replication forks and reduced fork speed. Isoform 3 specifically affects pre-mRNA splicing. This activity is independent from methyltransferase activity. This Rattus norvegicus (Rat) protein is Histone-arginine methyltransferase CARM1 (Carm1).